The sequence spans 158 residues: ATP synthase subunit b', chloroplastic (158 aa).

Residues 25–45 form a helical membrane-spanning segment; that stretch reads ATLPLMALQFIILTTILNFIF.

The protein belongs to the ATPase B chain family. In terms of assembly, F-type ATPases have 2 components, F(1) - the catalytic core - and F(0) - the membrane proton channel. F(1) has five subunits: alpha(3), beta(3), gamma(1), delta(1), epsilon(1). F(0) has four main subunits: a(1), b(1), b'(1) and c(10-14). The alpha and beta chains form an alternating ring which encloses part of the gamma chain. F(1) is attached to F(0) by a central stalk formed by the gamma and epsilon chains, while a peripheral stalk is formed by the delta, b and b' chains.

Its subcellular location is the plastid. The protein localises to the chloroplast thylakoid membrane. Its function is as follows. F(1)F(0) ATP synthase produces ATP from ADP in the presence of a proton or sodium gradient. F-type ATPases consist of two structural domains, F(1) containing the extramembraneous catalytic core and F(0) containing the membrane proton channel, linked together by a central stalk and a peripheral stalk. During catalysis, ATP synthesis in the catalytic domain of F(1) is coupled via a rotary mechanism of the central stalk subunits to proton translocation. Component of the F(0) channel, it forms part of the peripheral stalk, linking F(1) to F(0). The b'-subunit is a diverged and duplicated form of b found in plants and photosynthetic bacteria. This Gracilaria tenuistipitata var. liui (Red alga) protein is ATP synthase subunit b', chloroplastic.